We begin with the raw amino-acid sequence, 262 residues long: MANKKIRVTGAEAEQPSILKRISGALTLNPLDYHLDYSKLISLNFMVKISFHDASDYDLFVREGITPVELFEALASNWSTDSGEVHYVDGNTHDKDEIDTSVKLCELITIIKDLPFHKSEESTHFSILSTSLTLGFGDQILQKHDNSVIPIITERSLPQYMHAIIQYEYPRVSGGIAATICAGICIRSPPIGNCPPIMKPLHLELLCYHYGLKMSGDAPSPAEGKIGRIKRPTERKEDTPSMTKRLKGGVGATISRMLSWKE.

The interval 219–243 (PSPAEGKIGRIKRPTERKEDTPSMT) is disordered.

This sequence belongs to the nucleorhabdovirus type-1 matrix protein family. Homomultimer. Interacts with nucleoprotein and with the cytoplasmic domain of glycoprotein.

It localises to the virion membrane. The protein resides in the host endomembrane system. Its function is as follows. Plays a major role in assembly and budding of virion. Completely covers the ribonucleoprotein coil and keep it in condensed bullet-shaped form. Inhibits viral transcription and stimulates replication. The sequence is that of Matrix protein (M) from Rice yellow stunt virus (RYSV).